The primary structure comprises 241 residues: Proteasome subunit alpha type-5 (241 aa).

Belongs to the peptidase T1A family. The 26S proteasome consists of a 20S proteasome core and two 19S regulatory subunits. The 20S proteasome core is composed of 28 subunits that are arranged in four stacked rings, resulting in a barrel-shaped structure. The two end rings are each formed by seven alpha subunits, and the two central rings are each formed by seven beta subunits. The catalytic chamber with the active sites is on the inside of the barrel.

It is found in the cytoplasm. The protein resides in the nucleus. Functionally, the proteasome is a multicatalytic proteinase complex which is characterized by its ability to cleave peptides with Arg, Phe, Tyr, Leu, and Glu adjacent to the leaving group at neutral or slightly basic pH. The proteasome has an ATP-dependent proteolytic activity. The chain is Proteasome subunit alpha type-5 (psmA5) from Dictyostelium discoideum (Social amoeba).